A 463-amino-acid chain; its full sequence is Phosphomannomutase (463 aa).

Ser103 functions as the Phosphoserine intermediate in the catalytic mechanism. Positions 103, 248, 250, and 252 each coordinate Mg(2+).

Belongs to the phosphohexose mutase family. The cofactor is Mg(2+).

The protein localises to the cell membrane. It catalyses the reaction alpha-D-mannose 1-phosphate = D-mannose 6-phosphate. It functions in the pathway nucleotide-sugar biosynthesis; GDP-alpha-D-mannose biosynthesis; alpha-D-mannose 1-phosphate from D-fructose 6-phosphate: step 2/2. The protein operates within bacterial outer membrane biogenesis; LPS O-antigen biosynthesis. Its function is as follows. Involved in GDP-mannose biosynthesis which serves as the activated sugar nucleotide precursor for mannose residues in cell surface polysaccharides. The protein is Phosphomannomutase (rfbB) of Vibrio cholerae serotype O1 (strain ATCC 39315 / El Tor Inaba N16961).